Here is a 153-residue protein sequence, read N- to C-terminus: Pheromone-binding protein Gp-9 (153 aa).

A signal peptide spans 1–19 (MKTFVLHIFIFAFVAFASA). Cystine bridges form between Cys37–Cys77, Cys73–Cys129, and Cys118–Cys138.

Belongs to the PBP/GOBP family. As to quaternary structure, homodimer.

The protein localises to the secreted. Its function is as follows. Colony queen number, a major feature of social organization, is associated with worker genotype for Gp-9. Colonies are headed by either a single reproductive queen (monogyne form) or multiple queens (polygyne form). Differences in worker Gp-9 genotypes between social forms may cause differences in workers' abilities to recognize queens and regulate their numbers. This is Pheromone-binding protein Gp-9 from Solenopsis geminata (Tropical fire ant).